An 899-amino-acid polypeptide reads, in one-letter code: RNA-binding motif protein 25 (899 aa).

A compositionally biased stretch (polar residues) spans 1 to 20 (MADESSSPATGDPNSQKPES). A disordered region spans residues 1-112 (MADESSSPAT…SMPQYQPQPG (112 aa)). Pro residues predominate over residues 26 to 63 (IPNPNPNPSLTPPPPQQHSQPPVAPLVPPGPPYAPPAQ). The 78-residue stretch at 204 to 281 (TTIYIGKIAT…QELLVNVNQA (78 aa)) folds into the RRM domain. Disordered stretches follow at residues 298-572 (KKAK…EQNL) and 611-778 (GESA…KESG). Basic and acidic residues-rich tracts occupy residues 317–340 (EQDK…KENI) and 354–372 (EADR…ERLK). The segment covering 375-384 (PLPPPPPPPA) has biased composition (pro residues). Residues 430–505 (WSKRNDRRSR…QYEKEKEKEK (76 aa)) show a composition bias toward basic and acidic residues. Residues 434 to 578 (NDRRSRERGE…EQNLQQQQLD (145 aa)) adopt a coiled-coil conformation. The span at 515-524 (YEEEEEEDDD) shows a compositional bias: acidic residues. The short motif at 526-533 (SRRRWHRA) is the Nuclear localization signal 1 element. A compositionally biased stretch (basic and acidic residues) spans 533-568 (AALDERRRRQLREKEDDLADRLKEEEEVAEAKRSAE). Residues 626-640 (GSGNESMAIDNNSGS) are compositionally biased toward polar residues. Basic and acidic residues-rich tracts occupy residues 723-733 (PKEETIETEKQ) and 740-778 (DKAS…KESG). The short motif at 735-742 (SRRSHDKA) is the Nuclear localization signal 2 element. A PWI domain is found at 802–899 (EDLFSYEINW…EAGVPVKSKA (98 aa)).

In terms of assembly, specifically associates with functional splicing complexes. Associates with exon junction complex (EJC) proteins. Post-translationally, phosphorylated; the phosphorylation level is repressed by abscisic acid (ABA).

Its subcellular location is the nucleus. Functionally, RNA-binding protein that acts as a regulator of alternative pre-mRNA splicing. Negative regulator of responses to abscisic acid (ABA), including in early development. This is RNA-binding motif protein 25 from Arabidopsis thaliana (Mouse-ear cress).